A 185-amino-acid chain; its full sequence is Elongation factor P (185 aa).

Belongs to the elongation factor P family.

The protein localises to the cytoplasm. Its pathway is protein biosynthesis; polypeptide chain elongation. Functionally, involved in peptide bond synthesis. Stimulates efficient translation and peptide-bond synthesis on native or reconstituted 70S ribosomes in vitro. Probably functions indirectly by altering the affinity of the ribosome for aminoacyl-tRNA, thus increasing their reactivity as acceptors for peptidyl transferase. The protein is Elongation factor P of Nitratidesulfovibrio vulgaris (strain DSM 19637 / Miyazaki F) (Desulfovibrio vulgaris).